The chain runs to 148 residues: Lysozyme C-3 (148 aa).

An N-terminal signal peptide occupies residues 1-18; that stretch reads MKTLLVLALLLLSVSVQA. In terms of domain architecture, C-type lysozyme spans 19-148; that stretch reads KVYDRCEFAR…VSQYIRGCKL (130 aa). Disulfide bonds link Cys-24–Cys-146, Cys-48–Cys-134, Cys-83–Cys-99, and Cys-95–Cys-113. Active-site residues include Glu-53 and Asp-71.

This sequence belongs to the glycosyl hydrolase 22 family. As to quaternary structure, monomer.

It localises to the secreted. The enzyme catalyses Hydrolysis of (1-&gt;4)-beta-linkages between N-acetylmuramic acid and N-acetyl-D-glucosamine residues in a peptidoglycan and between N-acetyl-D-glucosamine residues in chitodextrins.. Functionally, lysozymes have primarily a bacteriolytic function; those in tissues and body fluids are associated with the monocyte-macrophage system and enhance the activity of immunoagents. This chain is Lysozyme C-3, found in Sus scrofa (Pig).